The primary structure comprises 178 residues: Putative peroxiredoxin in rubredoxin operon (178 aa).

Residues 3–163 enclose the Thioredoxin domain; it reads RLVGKPAPEF…TLRVLKAFQT (161 aa). C50 (cysteine sulfenic acid (-SOH) intermediate) is an active-site residue.

Belongs to the peroxiredoxin family. AhpC/Prx1 subfamily. In terms of assembly, homodimer; disulfide-linked, upon oxidation.

The protein resides in the cytoplasm. The enzyme catalyses a hydroperoxide + [protein]-dithiol = [protein]-disulfide + an alcohol + H2O. Its function is as follows. Thiol-specific peroxidase that catalyzes the reduction of hydrogen peroxide and organic hydroperoxides to water and alcohols, respectively. Plays a role in cell protection against oxidative stress by detoxifying peroxides. The protein is Putative peroxiredoxin in rubredoxin operon of Clostridium pasteurianum.